Reading from the N-terminus, the 1341-residue chain is DNA-directed RNA polymerase subunit beta (1341 aa).

Belongs to the RNA polymerase beta chain family. The RNAP catalytic core consists of 2 alpha, 1 beta, 1 beta' and 1 omega subunit. When a sigma factor is associated with the core the holoenzyme is formed, which can initiate transcription.

It carries out the reaction RNA(n) + a ribonucleoside 5'-triphosphate = RNA(n+1) + diphosphate. Functionally, DNA-dependent RNA polymerase catalyzes the transcription of DNA into RNA using the four ribonucleoside triphosphates as substrates. In Vibrio cholerae serotype O1 (strain ATCC 39315 / El Tor Inaba N16961), this protein is DNA-directed RNA polymerase subunit beta.